A 172-amino-acid polypeptide reads, in one-letter code: Shikimate kinase (172 aa).

Residue 11–16 (GAGKST) participates in ATP binding. Serine 15 contributes to the Mg(2+) binding site. Substrate contacts are provided by aspartate 33, arginine 57, and glycine 79. Residue arginine 117 participates in ATP binding. Arginine 136 provides a ligand contact to substrate. An ATP-binding site is contributed by arginine 153.

This sequence belongs to the shikimate kinase family. As to quaternary structure, monomer. Mg(2+) serves as cofactor.

It is found in the cytoplasm. It carries out the reaction shikimate + ATP = 3-phosphoshikimate + ADP + H(+). It functions in the pathway metabolic intermediate biosynthesis; chorismate biosynthesis; chorismate from D-erythrose 4-phosphate and phosphoenolpyruvate: step 5/7. Functionally, catalyzes the specific phosphorylation of the 3-hydroxyl group of shikimic acid using ATP as a cosubstrate. This is Shikimate kinase from Pseudomonas putida (strain ATCC 700007 / DSM 6899 / JCM 31910 / BCRC 17059 / LMG 24140 / F1).